We begin with the raw amino-acid sequence, 292 residues long: THO complex subunit 4B (292 aa).

The tract at residues 1–50 (MSGGLDMSLDDIIKSNRKPTGSRGRGGIGGGNNTGGRGGSGSNSGPSRRF) is disordered. S2 is modified (N-acetylserine). A compositionally biased stretch (gly residues) spans 23-42 (RGRGGIGGGNNTGGRGGSGS). In terms of domain architecture, RRM spans 108–185 (TKLYISNLDY…KLMKIEIVGT (78 aa)). The segment covering 241–252 (GGGFGGGNFRGG) has biased composition (gly residues). A disordered region spans residues 241–292 (GGGFGGGNFRGGRGARGRGGRGSGGRGRDENVSAEDLDAELDKYHKEAMETS). Positions 280–292 (ELDKYHKEAMETS) are enriched in basic and acidic residues.

The protein belongs to the ALYREF family. In terms of assembly, interacts with RH15 and RH56.

It is found in the nucleus. The protein resides in the nucleoplasm. Its function is as follows. Export adapter involved in nuclear export of spliced and unspliced mRNA. This Arabidopsis thaliana (Mouse-ear cress) protein is THO complex subunit 4B (ALY2).